A 445-amino-acid chain; its full sequence is Ribosomal protein uS12 methylthiotransferase RimO (445 aa).

The region spanning 4–119 (IKVALVSLGC…LLESIKVFLK (116 aa)) is the MTTase N-terminal domain. Positions 13, 48, 82, 156, 160, and 163 each coordinate [4Fe-4S] cluster. Residues 142–372 (TTPTYTAYVR…MILQQSISKD (231 aa)) enclose the Radical SAM core domain. The TRAM domain maps to 375–441 (KEKIGKIYEV…EYDLIGVVYN (67 aa)).

It belongs to the methylthiotransferase family. RimO subfamily. [4Fe-4S] cluster is required as a cofactor.

The protein localises to the cytoplasm. The catalysed reaction is L-aspartate(89)-[ribosomal protein uS12]-hydrogen + (sulfur carrier)-SH + AH2 + 2 S-adenosyl-L-methionine = 3-methylsulfanyl-L-aspartate(89)-[ribosomal protein uS12]-hydrogen + (sulfur carrier)-H + 5'-deoxyadenosine + L-methionine + A + S-adenosyl-L-homocysteine + 2 H(+). In terms of biological role, catalyzes the methylthiolation of an aspartic acid residue of ribosomal protein uS12. This is Ribosomal protein uS12 methylthiotransferase RimO from Clostridium botulinum (strain Loch Maree / Type A3).